A 137-amino-acid chain; its full sequence is Ribosomal RNA large subunit methyltransferase H (137 aa).

Residues Leu56, Gly85, and 104-109 each bind S-adenosyl-L-methionine; that span reads LSPLTF.

The protein belongs to the RNA methyltransferase RlmH family. In terms of assembly, homodimer.

Its subcellular location is the cytoplasm. It catalyses the reaction pseudouridine(1915) in 23S rRNA + S-adenosyl-L-methionine = N(3)-methylpseudouridine(1915) in 23S rRNA + S-adenosyl-L-homocysteine + H(+). Functionally, specifically methylates the pseudouridine at position 1915 (m3Psi1915) in 23S rRNA. In Prochlorococcus marinus subsp. pastoris (strain CCMP1986 / NIES-2087 / MED4), this protein is Ribosomal RNA large subunit methyltransferase H.